We begin with the raw amino-acid sequence, 338 residues long: MSFEQKPKVTVILANLGTPDEATVPAVRRFLKQFLSDPRVIEIPKFIWWIILNLFVLPFRPKRVAHAYASVWSTDSPMREIVFEQTQRVQAYLERENKQFDLTVLPAMTYGNPGIDAVLEKLSAHPQEHVILLPLFPQYSATSTAPLYDAFAKWIPTQRNLPGLTIIKDYYQHPMFIQALAESVLAYQEQHGKPEKLLMSFHGIPQPYADKGDPYADRCRITAKLVAEALHLKDVEWAISFQSRFGKQEWVKPYTDQLLQDWAKQGVKSVQVLSPAFSADCLETLEELAIQNAELFQQAGGGSYAYIPALNSDQAHIDLLAGLVQANLDALTHTLAHR.

Positions 202 and 283 each coordinate Fe cation.

The protein belongs to the ferrochelatase family.

The protein resides in the cytoplasm. It catalyses the reaction heme b + 2 H(+) = protoporphyrin IX + Fe(2+). The protein operates within porphyrin-containing compound metabolism; protoheme biosynthesis; protoheme from protoporphyrin-IX: step 1/1. In terms of biological role, catalyzes the ferrous insertion into protoporphyrin IX. This is Ferrochelatase from Acinetobacter baumannii (strain ATCC 17978 / DSM 105126 / CIP 53.77 / LMG 1025 / NCDC KC755 / 5377).